The chain runs to 146 residues: Hemoglobin subunit beta (146 aa).

Positions 2-146 (HWTAEEKQLI…VAHALARKYH (145 aa)) constitute a Globin domain. Heme b-binding residues include His-63 and His-92.

It belongs to the globin family. In terms of assembly, heterotetramer of two alpha chains and two beta chains. Red blood cells.

Its function is as follows. Involved in oxygen transport from the lung to the various peripheral tissues. This chain is Hemoglobin subunit beta (HBB), found in Ciconia ciconia (White stork).